We begin with the raw amino-acid sequence, 137 residues long: 15 kDa protein A (137 aa).

The first 20 residues, 1 to 20 (MAGVWKVLVVLVGLAVVACA), serve as a signal peptide directing secretion. Disulfide bonds link Cys77/Cys88 and Cys99/Cys116.

This sequence belongs to the cathelicidin family. Large granules of neutrophils.

It localises to the secreted. Its function is as follows. Binds to bacterial lipopolysaccharides (LPS), potentiates strongly the early antibacterial effects of BPI. Inhibits the late lethal action of BPI. The sequence is that of 15 kDa protein A from Oryctolagus cuniculus (Rabbit).